A 184-amino-acid polypeptide reads, in one-letter code: Small ribosomal subunit protein bS16 (184 aa).

The segment covering 150-160 (KKAAEAAEKAA) has biased composition (basic and acidic residues). Positions 150 to 184 (KKAAEAAEKAAAEAPAEEATEAPAEEAAATEAAAE) are disordered. Residues 164 to 173 (PAEEATEAPA) are compositionally biased toward acidic residues. The segment covering 174 to 184 (EEAAATEAAAE) has biased composition (low complexity).

This sequence belongs to the bacterial ribosomal protein bS16 family.

The sequence is that of Small ribosomal subunit protein bS16 from Bacteroides thetaiotaomicron (strain ATCC 29148 / DSM 2079 / JCM 5827 / CCUG 10774 / NCTC 10582 / VPI-5482 / E50).